Consider the following 220-residue polypeptide: Kinetochore protein Spc25 (220 aa).

Residues 41–119 (ILLDVKEAAA…NEIMERIHTL (79 aa)) adopt a coiled-coil conformation.

Belongs to the SPC25 family. As to quaternary structure, component of the Ndc80 complex, which is composed of Ndc80, Nuf2 and Spc25.

The protein localises to the nucleus. The protein resides in the chromosome. It localises to the centromere. It is found in the kinetochore. Acts as a component of the essential kinetochore-associated Ndc80 complex, which is required for chromosome segregation and spindle checkpoint activity during meiosis and mitosis. Required for kinetochore integrity and the organization of stable microtubule binding sites in the outer plate of the kinetochore. Participates in SAC signaling that responds specifically to disruptions in spindle microtubule dynamics. The NDC80 complex synergistically enhances the affinity of the SKA1 complex for microtubules and may allow the NDC80 complex to track depolymerizing microtubules. The sequence is that of Kinetochore protein Spc25 from Drosophila erecta (Fruit fly).